Consider the following 265-residue polypeptide: Tryptophan synthase alpha chain (265 aa).

Residues E49 and D60 each act as proton acceptor in the active site.

Belongs to the TrpA family. As to quaternary structure, tetramer of two alpha and two beta chains.

It catalyses the reaction (1S,2R)-1-C-(indol-3-yl)glycerol 3-phosphate + L-serine = D-glyceraldehyde 3-phosphate + L-tryptophan + H2O. Its pathway is amino-acid biosynthesis; L-tryptophan biosynthesis; L-tryptophan from chorismate: step 5/5. In terms of biological role, the alpha subunit is responsible for the aldol cleavage of indoleglycerol phosphate to indole and glyceraldehyde 3-phosphate. This is Tryptophan synthase alpha chain from Cupriavidus metallidurans (strain ATCC 43123 / DSM 2839 / NBRC 102507 / CH34) (Ralstonia metallidurans).